A 304-amino-acid chain; its full sequence is tRNA dimethylallyltransferase (304 aa).

Position 10–17 (10–17 (GPTASGKS)) interacts with ATP. Residue 12–17 (TASGKS) coordinates substrate. The segment at 35 to 38 (DSRQ) is interaction with substrate tRNA.

This sequence belongs to the IPP transferase family. In terms of assembly, monomer. Requires Mg(2+) as cofactor.

It carries out the reaction adenosine(37) in tRNA + dimethylallyl diphosphate = N(6)-dimethylallyladenosine(37) in tRNA + diphosphate. Its function is as follows. Catalyzes the transfer of a dimethylallyl group onto the adenine at position 37 in tRNAs that read codons beginning with uridine, leading to the formation of N6-(dimethylallyl)adenosine (i(6)A). This Gloeothece citriformis (strain PCC 7424) (Cyanothece sp. (strain PCC 7424)) protein is tRNA dimethylallyltransferase.